Consider the following 284-residue polypeptide: L-ribulose-5-phosphate 3-epimerase UlaE (284 aa).

The protein belongs to the L-ribulose-5-phosphate 3-epimerase family.

The catalysed reaction is L-ribulose 5-phosphate = L-xylulose 5-phosphate. The protein operates within cofactor degradation; L-ascorbate degradation; D-xylulose 5-phosphate from L-ascorbate: step 3/4. Functionally, catalyzes the isomerization of L-xylulose-5-phosphate to L-ribulose-5-phosphate. Is involved in the anaerobic L-ascorbate utilization. This is L-ribulose-5-phosphate 3-epimerase UlaE from Salmonella typhimurium (strain LT2 / SGSC1412 / ATCC 700720).